Consider the following 198-residue polypeptide: Protein GrpE (198 aa).

Residues 1–27 (MEERNEQVVEETKEAQTEEATIEKNSE) show a composition bias toward basic and acidic residues. Residues 1–39 (MEERNEQVVEETKEAQTEEATIEKNSEESVTEEATEETV) form a disordered region. A compositionally biased stretch (acidic residues) spans 29-39 (SVTEEATEETV).

It belongs to the GrpE family. Homodimer.

The protein resides in the cytoplasm. Its function is as follows. Participates actively in the response to hyperosmotic and heat shock by preventing the aggregation of stress-denatured proteins, in association with DnaK and GrpE. It is the nucleotide exchange factor for DnaK and may function as a thermosensor. Unfolded proteins bind initially to DnaJ; upon interaction with the DnaJ-bound protein, DnaK hydrolyzes its bound ATP, resulting in the formation of a stable complex. GrpE releases ADP from DnaK; ATP binding to DnaK triggers the release of the substrate protein, thus completing the reaction cycle. Several rounds of ATP-dependent interactions between DnaJ, DnaK and GrpE are required for fully efficient folding. In Bacillus cytotoxicus (strain DSM 22905 / CIP 110041 / 391-98 / NVH 391-98), this protein is Protein GrpE.